We begin with the raw amino-acid sequence, 81 residues long: uncharacterized protein (81 aa).

This is an uncharacterized protein from Sulfolobus islandicus rod-shaped virus 1 (SIRV-1).